A 144-amino-acid chain; its full sequence is Large ribosomal subunit protein uL15 (144 aa).

The disordered stretch occupies residues 1 to 51 (MRLNTLSPAEGAKHSAKRLGRGIGSGLGKTGGRGHKGQKSRTGGKVRRGFE). Residues 21–31 (RGIGSGLGKTG) show a composition bias toward gly residues. Positions 32–47 (GRGHKGQKSRTGGKVR) are enriched in basic residues.

Belongs to the universal ribosomal protein uL15 family. Part of the 50S ribosomal subunit.

Binds to the 23S rRNA. This is Large ribosomal subunit protein uL15 from Actinobacillus succinogenes (strain ATCC 55618 / DSM 22257 / CCUG 43843 / 130Z).